A 297-amino-acid chain; its full sequence is MSLSGLITALATPFRADGALDPDGWQRLLHLQLEGGVHGVVVAGSTGEAATLTDAEYDLLLASAVERIGGRIPVMAGTGLSGTAKTIEQTRRAAALGASHALVVTPPYVRPTQAGLIAHYRAVADQGGLPVVLYNVPGRTGCDMQPETVAELASHPNIVGIKEAVGDTGRVQALLALRSPQFAVLSGDDGTAARSIRAGIDGLISVGSNVLPGAYRRMCELAAAHDHEATESWDARLQPFHDFCGVEPNPIPVKALLRRIGIGHDLRLPLLPLSASHHAAADHLAGDIAALEALSSH.

Threonine 46 provides a ligand contact to pyruvate. Catalysis depends on tyrosine 134, which acts as the Proton donor/acceptor. Lysine 162 (schiff-base intermediate with substrate) is an active-site residue. A pyruvate-binding site is contributed by isoleucine 204.

It belongs to the DapA family. In terms of assembly, homotetramer; dimer of dimers.

It localises to the cytoplasm. The enzyme catalyses L-aspartate 4-semialdehyde + pyruvate = (2S,4S)-4-hydroxy-2,3,4,5-tetrahydrodipicolinate + H2O + H(+). The protein operates within amino-acid biosynthesis; L-lysine biosynthesis via DAP pathway; (S)-tetrahydrodipicolinate from L-aspartate: step 3/4. Catalyzes the condensation of (S)-aspartate-beta-semialdehyde [(S)-ASA] and pyruvate to 4-hydroxy-tetrahydrodipicolinate (HTPA). The sequence is that of 4-hydroxy-tetrahydrodipicolinate synthase from Stenotrophomonas maltophilia (strain K279a).